Consider the following 550-residue polypeptide: Copine-F (550 aa).

C2 domains are found at residues 1 to 115 and 123 to 246; these read MAET…RLIG and ITGK…PIIN. The 226-residue stretch at 296-521 folds into the VWFA domain; that stretch reads DLMVAIDCTE…DFQNEILRKL (226 aa).

It belongs to the copine family.

In Dictyostelium discoideum (Social amoeba), this protein is Copine-F (cpnF).